We begin with the raw amino-acid sequence, 617 residues long: Probable Xaa-Pro aminopeptidase P (617 aa).

Mn(2+)-binding residues include Asp-414, Asp-425, Glu-523, and Glu-537.

It belongs to the peptidase M24B family. Mn(2+) is required as a cofactor.

The enzyme catalyses Release of any N-terminal amino acid, including proline, that is linked to proline, even from a dipeptide or tripeptide.. Catalyzes the removal of a penultimate prolyl residue from the N-termini of peptides. The polypeptide is Probable Xaa-Pro aminopeptidase P (AMPP) (Blastomyces gilchristii (strain SLH14081) (Blastomyces dermatitidis)).